Reading from the N-terminus, the 324-residue chain is NAD(P)H-dependent D-xylose reductase XYR1 (324 aa).

The active-site Proton donor is the Y50. A substrate-binding site is contributed by H112. NAD(+)-binding positions include S168 to N169, S217 to E226, and K273 to N283.

It belongs to the aldo/keto reductase family.

The enzyme catalyses xylitol + NAD(+) = D-xylose + NADH + H(+). The catalysed reaction is xylitol + NADP(+) = D-xylose + NADPH + H(+). It participates in carbohydrate metabolism; D-xylose degradation. In terms of biological role, catalyzes the initial reaction in the xylose utilization pathway by reducing D-xylose into xylitol. Xylose is a major component of hemicelluloses such as xylan. Most fungi utilize D-xylose via three enzymatic reactions, xylose reductase (XR), xylitol dehydrogenase (XDH), and xylulokinase, to form xylulose 5-phosphate, which enters pentose phosphate pathway. In Pyricularia oryzae (strain 70-15 / ATCC MYA-4617 / FGSC 8958) (Rice blast fungus), this protein is NAD(P)H-dependent D-xylose reductase XYR1 (XYR1).